A 575-amino-acid polypeptide reads, in one-letter code: MEAITKNGSLSQTLVHCGPKSLSSFIPVRCLRFSKNPFPKKLVVTRARTSINSDHEAANRPLFQFPPSLLDDRFLSISANQSEIDSLGRDIEALKAKVSEKLVCMDVKERIHLIHLLVSLGVAYHFEKQIEEFLKVDFENVEDMNLGEEDMYSISVIFRVFRLYRHKLSSDVFNRFKEENGDFKKCLLDDKKSLTKQWASRGNTWNYFVGGSNEEHLSGHIKNVLYLSQQENAEVVMSREYIQFYEQETHHDETLLKFAKINFKFMQLHYVQELQTIVKWWKELDLESKIPNYYRVRAVECLYWAMAVYMEPQYSVARIILSKSLVLWTIIDDLYDAYCTLPEAIAFTENMERWETDAIDMPDHMKVLLRSLIDLMEDFKGEVRSEGRLYSVEYGIDEWKRLFRADLTISKWARTGYIPNYDEYMEVGIVTGGVDVTVAFAFIGMGEAGKEAFDWIRSRPKFIQTIDLKSRLRDDVATYKDEMARGEIATGINCYMKQYKVTEEEAFLEFHRRIKHTSKLVNEEYFKTTVPLKLVRIAFNVGRVIDTNYKHGDGLTYTGIVGGQITSLFLDLITI.

The N-terminal 52 residues, 1–52, are a transit peptide targeting the chloroplast; sequence MEAITKNGSLSQTLVHCGPKSLSSFIPVRCLRFSKNPFPKKLVVTRARTSIN. Residues D332, D336, D474, T478, and E482 each coordinate Mg(2+). The DDXXD motif motif lies at 332–336; the sequence is DDLYD.

It belongs to the terpene synthase family. Tpsa subfamily. As to expression, predominantly expressed in roots but also in leaves and stems.

It localises to the plastid. The protein resides in the chloroplast. Its function is as follows. Does not possess diterpene synthase activity. The sequence is that of Inactive terpenoid synthase 20, chloroplastic from Arabidopsis thaliana (Mouse-ear cress).